Consider the following 157-residue polypeptide: Transcription elongation factor GreA (157 aa).

The protein belongs to the GreA/GreB family.

In terms of biological role, necessary for efficient RNA polymerase transcription elongation past template-encoded arresting sites. The arresting sites in DNA have the property of trapping a certain fraction of elongating RNA polymerases that pass through, resulting in locked ternary complexes. Cleavage of the nascent transcript by cleavage factors such as GreA or GreB allows the resumption of elongation from the new 3'terminus. GreA releases sequences of 2 to 3 nucleotides. This is Transcription elongation factor GreA from Phenylobacterium zucineum (strain HLK1).